We begin with the raw amino-acid sequence, 285 residues long: G patch domain-containing protein 11 (285 aa).

Residues 51–87 (MLRQIREARRKEEKQQEANLKNRQKSLKEEEQERRDI) are a coiled coil. Residues 59-84 (RRKEEKQQEANLKNRQKSLKEEEQER) are disordered. A G-patch domain is found at 95–141 (CENKGFALLQKMGYKSGQALGKSGGGIVEPIPLNIKTGKSGIGHEAS). The residue at position 141 (Ser141) is a Phosphoserine. N6-acetyllysine is present on Lys149. Residues 218–235 (EETEEDEEEKEQDEDEYK) show a composition bias toward acidic residues. The segment at 218 to 237 (EETEEDEEEKEQDEDEYKSE) is disordered.

The protein belongs to the GPATCH11 family.

It is found in the chromosome. Its subcellular location is the centromere. It localises to the kinetochore. The chain is G patch domain-containing protein 11 (GPATCH11) from Homo sapiens (Human).